We begin with the raw amino-acid sequence, 163 residues long: Large ribosomal subunit protein uL10 (163 aa).

This sequence belongs to the universal ribosomal protein uL10 family. As to quaternary structure, part of the ribosomal stalk of the 50S ribosomal subunit. The N-terminus interacts with L11 and the large rRNA to form the base of the stalk. The C-terminus forms an elongated spine to which L12 dimers bind in a sequential fashion forming a multimeric L10(L12)X complex.

Forms part of the ribosomal stalk, playing a central role in the interaction of the ribosome with GTP-bound translation factors. This Histophilus somni (strain 2336) (Haemophilus somnus) protein is Large ribosomal subunit protein uL10.